The following is a 119-amino-acid chain: Large ribosomal subunit protein bL20 (119 aa).

It belongs to the bacterial ribosomal protein bL20 family.

Binds directly to 23S ribosomal RNA and is necessary for the in vitro assembly process of the 50S ribosomal subunit. It is not involved in the protein synthesizing functions of that subunit. The polypeptide is Large ribosomal subunit protein bL20 (Enterococcus faecalis (strain ATCC 700802 / V583)).